The following is a 592-amino-acid chain: Serine/threonine-protein kinase ksg1 (592 aa).

Residues 1–10 show a composition bias toward polar residues; sequence MRNTHNPNET. The interval 1 to 92 is disordered; it reads MRNTHNPNET…NPSSGASTPN (92 aa). Residues 11–22 are compositionally biased toward acidic residues; the sequence is EASEDAENDTQS. Residues 27-37 are compositionally biased toward basic and acidic residues; the sequence is SFDHGSSEKLN. Polar residues predominate over residues 42-68; sequence PKTQNSAIPQSNALNTTPNESTSQIDS. Phosphoserine occurs at positions 64 and 69. Residues 80–92 show a composition bias toward polar residues; it reads STPNPSSGASTPN. The 268-residue stretch at 99 to 366 folds into the Protein kinase domain; it reads FKFGEILGEG…VDEIHQHPFF (268 aa). Residues 109 to 111 and Lys-128 each bind ATP; that span reads SYS. Positions 130 to 175 are PIF-pocket; sequence LDKRHIIKEKKEKYVNIEKEALCILSKHPGFIKLFYTFQDAHNLYF. Residues 178–180 and Glu-184 contribute to the ATP site; that span reads SLA. The active-site Proton acceptor is Asp-223. Positions 227 and 241 each coordinate ATP. Residues 461–572 enclose the PH domain; that stretch reads ISKIGTLNVY…ELLDKASSIS (112 aa).

This sequence belongs to the protein kinase superfamily. AGC Ser/Thr protein kinase family. PDPK1 subfamily.

Its subcellular location is the cytoplasm. The enzyme catalyses L-seryl-[protein] + ATP = O-phospho-L-seryl-[protein] + ADP + H(+). The catalysed reaction is L-threonyl-[protein] + ATP = O-phospho-L-threonyl-[protein] + ADP + H(+). Functionally, involved in the control of sexual development and cell growth under stressed conditions. Phosphorylates AGC kinase gad8 at 'Thr-387', activating gad8 kinase activity and promoting sexual development. Phosphorylates AGC kinase psk1 at 'Ser-248', activating psk1 kinase activity and promoting phosphorylation of ribosomal protein S6. The protein is Serine/threonine-protein kinase ksg1 of Schizosaccharomyces pombe (strain 972 / ATCC 24843) (Fission yeast).